We begin with the raw amino-acid sequence, 417 residues long: Tryptophan synthase beta chain (417 aa).

At K110 the chain carries N6-(pyridoxal phosphate)lysine.

Belongs to the TrpB family. Tetramer of two alpha and two beta chains. Pyridoxal 5'-phosphate is required as a cofactor.

It carries out the reaction (1S,2R)-1-C-(indol-3-yl)glycerol 3-phosphate + L-serine = D-glyceraldehyde 3-phosphate + L-tryptophan + H2O. Its pathway is amino-acid biosynthesis; L-tryptophan biosynthesis; L-tryptophan from chorismate: step 5/5. Its function is as follows. The beta subunit is responsible for the synthesis of L-tryptophan from indole and L-serine. The polypeptide is Tryptophan synthase beta chain (Prochlorococcus marinus (strain NATL2A)).